The sequence spans 23 residues: Thymidine phosphorylase (23 aa).

This sequence belongs to the thymidine/pyrimidine-nucleoside phosphorylase family. In terms of assembly, homodimer.

It carries out the reaction thymidine + phosphate = 2-deoxy-alpha-D-ribose 1-phosphate + thymine. Functionally, the enzymes which catalyze the reversible phosphorolysis of pyrimidine nucleosides are involved in the degradation of these compounds and in their utilization as carbon and energy sources, or in the rescue of pyrimidine bases for nucleotide synthesis. The sequence is that of Thymidine phosphorylase (deoA) from Lacticaseibacillus rhamnosus (Lactobacillus rhamnosus).